The chain runs to 417 residues: Exodeoxyribonuclease 7 large subunit (417 aa).

Belongs to the XseA family. As to quaternary structure, heterooligomer composed of large and small subunits.

It localises to the cytoplasm. It catalyses the reaction Exonucleolytic cleavage in either 5'- to 3'- or 3'- to 5'-direction to yield nucleoside 5'-phosphates.. Bidirectionally degrades single-stranded DNA into large acid-insoluble oligonucleotides, which are then degraded further into small acid-soluble oligonucleotides. This Lactococcus lactis subsp. cremoris (strain MG1363) protein is Exodeoxyribonuclease 7 large subunit.